Reading from the N-terminus, the 371-residue chain is Alginate lyase (371 aa).

Positions methionine 1 to alanine 28 are cleaved as a signal peptide. Substrate is bound by residues serine 67–lysine 68, histidine 140–threonine 141, and tyrosine 258.

It belongs to the polysaccharide lyase 5 family.

The protein localises to the periplasm. It carries out the reaction Eliminative cleavage of alginate to give oligosaccharides with 4-deoxy-alpha-L-erythro-hex-4-enuronosyl groups at their non-reducing ends and beta-D-mannuronate at their reducing end.. Functionally, catalyzes the depolymerization of alginate by cleaving the beta-1,4 glycosidic bond between two adjacent sugar residues via a beta-elimination mechanism. May serve to degrade mislocalized alginate that is trapped in the periplasmic space. The protein is Alginate lyase of Pseudomonas putida (strain ATCC 47054 / DSM 6125 / CFBP 8728 / NCIMB 11950 / KT2440).